Reading from the N-terminus, the 1243-residue chain is Serine/threonine-protein kinase/endoribonuclease IRE1 (1243 aa).

A signal peptide spans Met1–Ala35. The Lumenal segment spans residues Gln36 to Asn585. 2 disordered regions span residues His70–Tyr132 and Gln149–Ser172. A compositionally biased stretch (basic and acidic residues) spans Pro73–Asn85. Over residues Gln90 to His99 the composition is skewed to polar residues. Over residues Ser163 to Ser172 the composition is skewed to low complexity. Asn226, Asn470, and Asn554 each carry an N-linked (GlcNAc...) asparagine glycan. A helical membrane pass occupies residues Ser586–Tyr606. Residues Asn607–Leu1243 are Cytoplasmic-facing. Positions Gly638–Thr765 are disordered. Low complexity predominate over residues Pro650 to Gln660. The segment covering Glu674–Ser693 has biased composition (basic and acidic residues). Positions Lys732–Gly749 are enriched in basic residues. In terms of domain architecture, Protein kinase spans Val809–Phe1105. Residues Leu815–Val823 and Lys837 each bind ATP. Residues Ser819, Lys837, Glu881, and Cys883 each contribute to the ADP site. The active-site Proton acceptor is Asp931. Mg(2+) contacts are provided by Asn936 and Asp953. The region spanning Pro1108–Pro1240 is the KEN domain.

It belongs to the protein kinase superfamily. Ser/Thr protein kinase family. Mg(2+) is required as a cofactor. Autophosphorylated mainly on serine residues; phosphorylation enables nucleotide binding by the active site.

The protein resides in the endoplasmic reticulum membrane. The catalysed reaction is L-seryl-[protein] + ATP = O-phospho-L-seryl-[protein] + ADP + H(+). It catalyses the reaction L-threonyl-[protein] + ATP = O-phospho-L-threonyl-[protein] + ADP + H(+). Functionally, senses unfolded proteins in the lumen of the endoplasmic reticulum via its N-terminal domain which leads to enzyme auto-activation. The active endoribonuclease domain splices precursor mRNAs to produce their mature form which then induces transcription of UPR target genes. This is Serine/threonine-protein kinase/endoribonuclease IRE1 from Hypocrea jecorina (strain QM6a) (Trichoderma reesei).